The chain runs to 245 residues: Bis(5'-nucleosyl)-tetraphosphatase PrpE [asymmetrical] (245 aa).

Belongs to the PrpE family. Requires Ni(2+) as cofactor.

The catalysed reaction is P(1),P(4)-bis(5'-guanosyl) tetraphosphate + H2O = GMP + GTP + 2 H(+). Functionally, asymmetrically hydrolyzes Ap4p to yield AMP and ATP. This is Bis(5'-nucleosyl)-tetraphosphatase PrpE [asymmetrical] from Geobacillus thermodenitrificans (strain NG80-2).